The following is a 351-amino-acid chain: Phosphoribosylformylglycinamidine cyclo-ligase (351 aa).

It belongs to the AIR synthase family.

The protein localises to the cytoplasm. The catalysed reaction is 2-formamido-N(1)-(5-O-phospho-beta-D-ribosyl)acetamidine + ATP = 5-amino-1-(5-phospho-beta-D-ribosyl)imidazole + ADP + phosphate + H(+). It participates in purine metabolism; IMP biosynthesis via de novo pathway; 5-amino-1-(5-phospho-D-ribosyl)imidazole from N(2)-formyl-N(1)-(5-phospho-D-ribosyl)glycinamide: step 2/2. This chain is Phosphoribosylformylglycinamidine cyclo-ligase, found in Idiomarina loihiensis (strain ATCC BAA-735 / DSM 15497 / L2-TR).